The primary structure comprises 309 residues: Sulfate adenylyltransferase subunit 2 (309 aa).

Belongs to the PAPS reductase family. CysD subfamily. As to quaternary structure, heterodimer composed of CysD, the smaller subunit, and CysN.

It carries out the reaction sulfate + ATP + H(+) = adenosine 5'-phosphosulfate + diphosphate. It participates in sulfur metabolism; hydrogen sulfide biosynthesis; sulfite from sulfate: step 1/3. Its function is as follows. With CysN forms the ATP sulfurylase (ATPS) that catalyzes the adenylation of sulfate producing adenosine 5'-phosphosulfate (APS) and diphosphate, the first enzymatic step in sulfur assimilation pathway. APS synthesis involves the formation of a high-energy phosphoric-sulfuric acid anhydride bond driven by GTP hydrolysis by CysN coupled to ATP hydrolysis by CysD. This chain is Sulfate adenylyltransferase subunit 2, found in Mycolicibacterium gilvum (strain PYR-GCK) (Mycobacterium gilvum (strain PYR-GCK)).